The sequence spans 401 residues: Imidazolonepropionase (401 aa).

Residues His-70 and His-72 each contribute to the Fe(3+) site. Residues His-70 and His-72 each contribute to the Zn(2+) site. 4-imidazolone-5-propanoate is bound by residues Arg-79, Tyr-142, and His-175. An N-formimidoyl-L-glutamate-binding site is contributed by Tyr-142. His-238 contacts Fe(3+). His-238 contributes to the Zn(2+) binding site. Gln-241 is a 4-imidazolone-5-propanoate binding site. Position 313 (Asp-313) interacts with Fe(3+). Position 313 (Asp-313) interacts with Zn(2+). Residues Asn-315 and Gly-317 each contribute to the N-formimidoyl-L-glutamate site. Thr-318 serves as a coordination point for 4-imidazolone-5-propanoate.

Belongs to the metallo-dependent hydrolases superfamily. HutI family. Zn(2+) is required as a cofactor. Requires Fe(3+) as cofactor.

The protein localises to the cytoplasm. The enzyme catalyses 4-imidazolone-5-propanoate + H2O = N-formimidoyl-L-glutamate. It functions in the pathway amino-acid degradation; L-histidine degradation into L-glutamate; N-formimidoyl-L-glutamate from L-histidine: step 3/3. Functionally, catalyzes the hydrolytic cleavage of the carbon-nitrogen bond in imidazolone-5-propanoate to yield N-formimidoyl-L-glutamate. It is the third step in the universal histidine degradation pathway. The polypeptide is Imidazolonepropionase (Acidiphilium cryptum (strain JF-5)).